The chain runs to 174 residues: Ribosome maturation factor RimM (174 aa).

Positions 97 to 173 (GNKFYFHEVI…DLPVGLVEMY (77 aa)) constitute a PRC barrel domain.

It belongs to the RimM family. Binds ribosomal protein uS19.

The protein localises to the cytoplasm. Functionally, an accessory protein needed during the final step in the assembly of 30S ribosomal subunit, possibly for assembly of the head region. Essential for efficient processing of 16S rRNA. May be needed both before and after RbfA during the maturation of 16S rRNA. It has affinity for free ribosomal 30S subunits but not for 70S ribosomes. The protein is Ribosome maturation factor RimM of Flavobacterium johnsoniae (strain ATCC 17061 / DSM 2064 / JCM 8514 / BCRC 14874 / CCUG 350202 / NBRC 14942 / NCIMB 11054 / UW101) (Cytophaga johnsonae).